Here is a 242-residue protein sequence, read N- to C-terminus: Ubiquinone biosynthesis O-methyltransferase (242 aa).

Residues Arg44, Gly64, Asp85, and Met129 each contribute to the S-adenosyl-L-methionine site.

Belongs to the methyltransferase superfamily. UbiG/COQ3 family.

The enzyme catalyses a 3-demethylubiquinol + S-adenosyl-L-methionine = a ubiquinol + S-adenosyl-L-homocysteine + H(+). The catalysed reaction is a 3-(all-trans-polyprenyl)benzene-1,2-diol + S-adenosyl-L-methionine = a 2-methoxy-6-(all-trans-polyprenyl)phenol + S-adenosyl-L-homocysteine + H(+). Its pathway is cofactor biosynthesis; ubiquinone biosynthesis. In terms of biological role, O-methyltransferase that catalyzes the 2 O-methylation steps in the ubiquinone biosynthetic pathway. The polypeptide is Ubiquinone biosynthesis O-methyltransferase (Citrobacter koseri (strain ATCC BAA-895 / CDC 4225-83 / SGSC4696)).